A 371-amino-acid polypeptide reads, in one-letter code: Glutamate 5-kinase (371 aa).

An ATP-binding site is contributed by K10. The substrate site is built by S50, D137, and N149. ATP-binding positions include 169–170 (SD) and 208–214 (TGGMYTK). Residues 274 to 352 (QGKVYIDDGA…EEIKNILGED (79 aa)) enclose the PUA domain.

It belongs to the glutamate 5-kinase family.

The protein localises to the cytoplasm. It carries out the reaction L-glutamate + ATP = L-glutamyl 5-phosphate + ADP. It functions in the pathway amino-acid biosynthesis; L-proline biosynthesis; L-glutamate 5-semialdehyde from L-glutamate: step 1/2. Its function is as follows. Catalyzes the transfer of a phosphate group to glutamate to form L-glutamate 5-phosphate. This is Glutamate 5-kinase from Dictyoglomus thermophilum (strain ATCC 35947 / DSM 3960 / H-6-12).